Here is a 386-residue protein sequence, read N- to C-terminus: Patatin-17 (386 aa).

Residues M1 to A23 form the signal peptide. Positions L32–I229 constitute a PNPLA domain. Residues G36–G41 carry the GXGXXG motif. The short motif at G75 to G79 is the GXSXG element. S77 functions as the Nucleophile in the catalytic mechanism. N-linked (GlcNAc...) asparagine glycosylation occurs at N202. Residue D215 is the Proton acceptor of the active site. The short motif at D215–A217 is the DGA/G element. Positions E321 to A384 form a coiled coil.

This sequence belongs to the patatin family.

The protein resides in the vacuole. Its function is as follows. Non-specific lipolytic acyl hydrolase (LAH), an activity which is thought to be involved in the response of tubers to pathogens. Catalyzes the non-specific hydrolysis of phospholipids, glycolipids, sulfolipids, and mono- and diacylglycerols includng p-nitrophenyl caprate. Confers resistance to southern corn rootworm (SCRW). The chain is Patatin-17 from Solanum cardiophyllum (Heartleaf nightshade).